A 1349-amino-acid polypeptide reads, in one-letter code: ABC multidrug transporter G (1349 aa).

Positions 51-299 (RQFLGFLKGS…FEDMGFVCPK (249 aa)) constitute an ABC transporter 1 domain. The N-linked (GlcNAc...) asparagine glycan is linked to Asn-144. Transmembrane regions (helical) follow at residues 407–427 (LSLI…GSLF), 436–456 (SIFL…LESM), 492–512 (IPVV…MAAL), and 523–543 (WIIV…VGAL). The N-linked (GlcNAc...) asparagine glycan is linked to Asn-549. The next 2 membrane-spanning stretches (helical) occupy residues 550-570 (ASKI…YLIP) and 580-600 (WIFY…NEFV). Asn-649 is a glycosylation site (N-linked (GlcNAc...) asparagine). Residues 659–679 (FGVIIGFWVFFIVLTALGLEL) traverse the membrane as a helical segment. The 243-residue stretch at 721–963 (FTWHDLDYHV…VLDYFARHGA (243 aa)) folds into the ABC transporter 2 domain. Residue 757–764 (GCSGAGKT) participates in ATP binding. A glycan (N-linked (GlcNAc...) asparagine) is linked at Asn-994. A run of 6 helical transmembrane segments spans residues 1056–1076 (VILH…IGDG), 1085–1105 (FAIF…QPFF), 1121–1143 (IYHW…ILCA), 1166–1186 (MYLQ…GIAA), 1193–1213 (FAAV…CGVV), and 1226–1246 (WLYY…EVLW). N-linked (GlcNAc...) asparagine glycosylation occurs at Asn-1287. The chain crosses the membrane as a helical span at residues 1318–1338 (TGITALFCVSSYAMVFLMMKL).

This sequence belongs to the ABC transporter superfamily. ABCG family. PDR (TC 3.A.1.205) subfamily.

It localises to the cell membrane. ABC efflux transporter that seems not to be able to transport azoles, nor rhodamine 6G (R-6G), a known substrate for many ABC transporters. This Aspergillus fumigatus (strain ATCC MYA-4609 / CBS 101355 / FGSC A1100 / Af293) (Neosartorya fumigata) protein is ABC multidrug transporter G.